The primary structure comprises 309 residues: Zinc-finger homeodomain protein 5 (309 aa).

Basic and acidic residues predominate over residues 1 to 16 (MDMRSHEMIERRREDN). The interval 1 to 21 (MDMRSHEMIERRREDNGNNNG) is disordered. The segment at 76–125 (YRECLKNHAASVGGSVHDGCGEFMPSGEEGTIEALRCAACDCHRNFHRKE) adopts a ZF-HD dimerization-type; degenerate zinc-finger fold. The homeobox DNA-binding region spans 240–303 (KKRFRTKFTT…NNKNNAKKPP (64 aa)).

Homo- and heterodimer with other ZFHD proteins. Interacts with MIF1, MIF2 and MIF3; these interactions prevent nuclear localization and DNA-binding to inhibit transcription regulation activity. Binds to ZHD1, ZHD2, ZHD4, ZHD10 and ZHD11. In terms of tissue distribution, mostly expressed in flowers and inflorescence.

The protein resides in the nucleus. Its function is as follows. Putative transcription factor. Binds DNA at 5'-ATTA-3' consensus promoter regions. Regulates floral architecture and leaf development. Regulators in the abscisic acid (ABA) signal pathway that confers sensitivity to ABA in an ARF2-dependent manner. This Arabidopsis thaliana (Mouse-ear cress) protein is Zinc-finger homeodomain protein 5 (ZHD5).